The primary structure comprises 739 residues: MMSNDLLVTDIEAEARTEENIWHSDNSALAAPPAATTSASQDQLPDDRYLNRESSWLDFNARVLALAADNSLPLLERAKFLAIFASNLDEFYMVRVAGLKRRDEMDLSVRSADGLTPREQLSRIGEQTQWIASRHARVFLDSVLPALGEEGIYIVTWTDLDQAERDQLSTYFNEQVFPVLTPLAVDPAHPFPFVSGLSLNLAVTVKQPEDGTQHFARVKVPNNVDRFVELANRGAVRDTSAGDEGQLIHRFLPMEELIAAFLPVLFPGTEIVEHHAFRITRNADFEVEEDRDEDLLQALERELARRRFGSPVRLEIADDMTESMLELLLRELDVHPSDVIEVPGLLDLSSLWQIYGLDRPALKDRAFIPDTHPAFAERETPKSIFATLREGDVLVHHPYHSFATSVQRFIEQATADPDVLAIKQTLYRTSGDSPIVLALIEAAEAGKQVVALVEIKARFDEQANIRWARALEHAGVHVVYGIVGLKTHCKTCLVVRREGPTIRRYCHIGTGNYNSKTARLYEDVGLLTAAPDIGADLTDLFNSLTGYSRKLAYRNLLVAPYGIRRGIIERVEREVAAHRESGPQTGKGLIRLKMNALVDEQVIDALYRASQAGVRVEVVVRGICALRPGTEGFSENIFVRSILGRFLEHSRIIHFRAIDEFWIGSADMMHRNLDRRVEVLAQVKDSRLTAQLDELLKSALDPFTRCWELRPDGQWTASPQKGQQVRDHQESLMERHRSR.

A disordered region spans residues 22-45; that stretch reads WHSDNSALAAPPAATTSASQDQLP. Low complexity predominate over residues 27–40; sequence SALAAPPAATTSAS. Asn87 is a binding site for ATP. Mg(2+) is bound by residues Arg428 and Arg458. The active-site Phosphohistidine intermediate is the His488. Residues Tyr521, Arg621, and His649 each coordinate ATP. Residues 714-739 form a disordered region; sequence QWTASPQKGQQVRDHQESLMERHRSR. Positions 724–739 are enriched in basic and acidic residues; the sequence is QVRDHQESLMERHRSR.

The protein belongs to the polyphosphate kinase 1 (PPK1) family. Requires Mg(2+) as cofactor. An intermediate of this reaction is the autophosphorylated ppk in which a phosphate is covalently linked to a histidine residue through a N-P bond.

The enzyme catalyses [phosphate](n) + ATP = [phosphate](n+1) + ADP. Its function is as follows. Catalyzes the reversible transfer of the terminal phosphate of ATP to form a long-chain polyphosphate (polyP). The chain is Polyphosphate kinase from Mycobacterium leprae (strain TN).